A 1311-amino-acid polypeptide reads, in one-letter code: Transcriptional regulator ATRX homolog (1311 aa).

The tract at residues 1-384 is disordered; it reads MGKKNPNARH…KQKNKRKHIR (384 aa). The span at 28-40 shows a compositional bias: basic and acidic residues; sequence SRRESATESKSAS. Over residues 61 to 83 the composition is skewed to low complexity; that stretch reads KASGKATVSSSSDSDQAVANSSA. Residues 114–125 are compositionally biased toward polar residues; sequence RGSQQKNVTIND. Phosphoserine is present on residues S126 and S127. Over residues 155–166 the composition is skewed to acidic residues; the sequence is SDSEEVDEEEES. The span at 181–202 shows a compositional bias: basic and acidic residues; the sequence is KPEKNSSKASKESIEKRQKAQK. Residues 219–237 show a composition bias toward low complexity; sequence RRGSLSSERSSRASSSRAE. The span at 241–265 shows a compositional bias: basic residues; sequence RPKRCVVRLKRVSLPKTKPAQKPKK. 3 positions are modified to phosphoserine: S267, S268, and S270. The segment covering 290–306 has biased composition (acidic residues); that stretch reads EADSDYEAPAAEEEEEE. Phosphoserine is present on residues S336, S338, S342, and S343. The span at 336–351 shows a compositional bias: basic and acidic residues; that stretch reads SESDKGSSDFEPEEKQ. Positions 352–361 are enriched in basic residues; sequence KKKGRKRIKK. Positions 476–664 constitute a Helicase ATP-binding domain; sequence ESQEKPGSGC…YCMIQFVKPN (189 aa). An ATP-binding site is contributed by 489-496; the sequence is HCMGLGKT. Residues 615–618 carry the DEGH box motif; it reads DEGH. The interval 837–878 is disordered; that stretch reads ASSGKVKKRKTRNGNAGGGDSDSDLEMLGGLGGGSSVQKDDP. Residues S857 and S859 each carry the phosphoserine modification. The Helicase C-terminal domain occupies 905–1085; it reads RLLQQCEAIG…SRHYNQTDLM (181 aa). Residues 1285–1311 are disordered; sequence MAGGSVAHGPPAAPAPGFEPDKVYEID.

The protein belongs to the SNF2/RAD54 helicase family.

It localises to the nucleus. Its subcellular location is the chromosome. The catalysed reaction is ATP + H2O = ADP + phosphate + H(+). Its function is as follows. Global transcriptional regulator. Modifies gene expression by affecting chromatin. This Drosophila melanogaster (Fruit fly) protein is Transcriptional regulator ATRX homolog (XNP).